A 230-amino-acid polypeptide reads, in one-letter code: Potassium/proton antiporter CemA (230 aa).

4 consecutive transmembrane segments (helical) span residues 7–27 (LPSF…SFSF), 106–126 (IILH…SFFL), 145–165 (LNDS…VGFH), and 181–201 (LGWV…PVIL).

Belongs to the CemA family.

It localises to the plastid. The protein resides in the chloroplast inner membrane. It catalyses the reaction K(+)(in) + H(+)(out) = K(+)(out) + H(+)(in). Functionally, contributes to K(+)/H(+) antiport activity by supporting proton efflux to control proton extrusion and homeostasis in chloroplasts in a light-dependent manner to modulate photosynthesis. Prevents excessive induction of non-photochemical quenching (NPQ) under continuous-light conditions. Indirectly promotes efficient inorganic carbon uptake into chloroplasts. This chain is Potassium/proton antiporter CemA, found in Oryza nivara (Indian wild rice).